The following is a 408-amino-acid chain: Apoptosis-inducing factor homolog A (408 aa).

Residues 34-38 (GCGFG), Arg-69, and Asp-314 contribute to the FAD site.

This sequence belongs to the FAD-dependent oxidoreductase family. FAD is required as a cofactor.

Functionally, putative FAD-dependent oxidoreductase. This Dictyostelium discoideum (Social amoeba) protein is Apoptosis-inducing factor homolog A (aifA).